We begin with the raw amino-acid sequence, 573 residues long: Developmental and secondary metabolism regulator veA (573 aa).

Residues 1–11 (MATLAAPPPPL) are compositionally biased toward pro residues. 2 disordered regions span residues 1-24 (MATL…SRIT) and 39-63 (QPKR…DPPP). Residues 27–230 (GKKITYKLNI…AEQGCRVRIR (204 aa)) form the Velvet domain. The short motif at 41 to 46 (KRARAC) is the Nuclear localization signal element. Phosphothreonine is present on residues Thr-167 and Thr-170. A Phosphoserine modification is found at Ser-183. 3 disordered regions span residues 236–295 (RRRG…RRPS), 307–367 (YQRP…SYQS), and 384–573 (SHIP…ATMR). Residues 241 to 260 (KRTEDYDYDNERGYNNRRPD) show a composition bias toward basic and acidic residues. Tyr-254 is subject to Phosphotyrosine. Pro residues-rich tracts occupy residues 318 to 339 (SSTP…PSTP) and 347 to 361 (PAPP…PPLH). The segment covering 387–412 (PQQTTTPTHPYSPRSSISHSRNQSIS) has biased composition (low complexity). Polar residues predominate over residues 452 to 493 (PSVNSRSKTPSNMITSLPPIQSLSELPSTTSQPSSAIGSSPA). The interval 459 to 498 (KTPSNMITSLPPIQSLSELPSTTSQPSSAIGSSPANEPGP) is PEST. The span at 510–522 (RTYEESFGHDDRP) shows a compositional bias: basic and acidic residues.

The protein belongs to the velvet family. VeA subfamily. As to quaternary structure, component of the heterotrimeric velvet complex composed of laeA, veA and velB; VeA acting as a bridging protein between laeA and velB. Interacts with the light-sensing phytochrome fphA. Interacts with llmF. In terms of processing, phosphorylated at Thr-167, Thr-170, Ser-183 and Tyr-254. Thr-167 should be phosphorylated and T170 and S183 should be dephosphorylated to achieve light induction of conidiation. Phosphorylation of Ser-183 and Tyr-254 influence sterigmatocystin production in a light-independent manner. Phosphorylation of Thr-167 and Thr-170 modulates expression of veA.

It is found in the nucleus. It localises to the cytoplasm. Component of the velvet transcription factor complex that controls sexual/asexual developmental ratio in response to light, promoting sexual development in the darkness while stimulating asexual sporulation under illumination. The velvet complex acts as a global regulator for secondary metabolite gene expression. Controls the expression of the sterigmatocystin and penicillin gene clusters. Represses the cryptic ors gene cluster producing orsellinic acid and its F9775 derivatives in a laeA-independent manner. Required for full induction of faoA gene expression by fructosyl amines. Positively regulates the expression of the early sexual development gene esdC. Controls the expression of mannoprotein mnpA. The sequence is that of Developmental and secondary metabolism regulator veA from Emericella nidulans (strain FGSC A4 / ATCC 38163 / CBS 112.46 / NRRL 194 / M139) (Aspergillus nidulans).